The primary structure comprises 49 residues: Large ribosomal subunit protein bL33 (49 aa).

The protein belongs to the bacterial ribosomal protein bL33 family.

This Desulforamulus reducens (strain ATCC BAA-1160 / DSM 100696 / MI-1) (Desulfotomaculum reducens) protein is Large ribosomal subunit protein bL33.